We begin with the raw amino-acid sequence, 1297 residues long: Phosphoribosylformylglycinamidine synthase (1297 aa).

The tract at residues F305 to R324 is disordered. G307–D318 contacts ATP. The Mg(2+) site is built by D679, E718, N722, and D886. Position 888 (S888) interacts with ATP. One can recognise a Glutamine amidotransferase type-1 domain in the interval I1044–K1297. C1137 functions as the Nucleophile in the catalytic mechanism. Active-site residues include H1262 and E1264.

In the N-terminal section; belongs to the FGAMS family. As to quaternary structure, monomer.

The protein localises to the cytoplasm. The catalysed reaction is N(2)-formyl-N(1)-(5-phospho-beta-D-ribosyl)glycinamide + L-glutamine + ATP + H2O = 2-formamido-N(1)-(5-O-phospho-beta-D-ribosyl)acetamidine + L-glutamate + ADP + phosphate + H(+). The protein operates within purine metabolism; IMP biosynthesis via de novo pathway; 5-amino-1-(5-phospho-D-ribosyl)imidazole from N(2)-formyl-N(1)-(5-phospho-D-ribosyl)glycinamide: step 1/2. Functionally, phosphoribosylformylglycinamidine synthase involved in the purines biosynthetic pathway. Catalyzes the ATP-dependent conversion of formylglycinamide ribonucleotide (FGAR) and glutamine to yield formylglycinamidine ribonucleotide (FGAM) and glutamate. This Mannheimia succiniciproducens (strain KCTC 0769BP / MBEL55E) protein is Phosphoribosylformylglycinamidine synthase.